The chain runs to 1877 residues: Proprotein convertase subtilisin/kexin type 5 (1877 aa).

Positions 1 to 34 are cleaved as a signal peptide; it reads MDWDWGNRCSRPGRRDLLCVLALLAGCLLPVCRT. Positions 35 to 116 are excised as a propeptide; that stretch reads RVYTNHWAVK…QQVVKKRTKR (82 aa). Residues 117–1768 are Extracellular-facing; sequence DYDLSHAQST…EAEFYEHTKT (1652 aa). The Peptidase S8 domain maps to 136 to 455; the sequence is MWYMHCSDNT…FGLMDAEAMV (320 aa). Residues Asp-173 and His-214 each act as charge relay system in the active site. N-linked (GlcNAc...) asparagine glycans are attached at residues Asn-227 and Asn-383. Ser-388 (charge relay system) is an active-site residue. The P/Homo B domain occupies 463–603; it reads TVPQQHVCVE…SLVLYGTSVQ (141 aa). The Cell attachment site signature appears at 521-523; the sequence is RGD. 22 FU repeats span residues 632–682, 685–732, 736–779, 781–826, 834–881, 884–929, 931–981, 984–1030, 1034–1079, 1081–1123, 1127–1168, 1206–1248, 1252–1299, 1301–1345, 1347–1390, 1392–1438, 1442–1487, 1491–1536, 1540–1585, 1589–1636, 1640–1685, and 1691–1738; these read EDYA…GHYH, KKRC…GSYE, KNVC…GQFF, GHDC…SYYL, YKSC…GEYI, QGHC…WKFE, KKQC…GHYP, GHAC…GEFQ, YEEC…KTFG, KWEC…GFHG, LGEC…STWP, TSQN…GTWP, SGSC…GFYA, DGVC…KHVA, EGVC…SFYP, MRQC…GTYK, NDEC…VEYW, SHRC…GYHT, SQQC…GYYG, SGRC…HYYA, AQTC…GEYR, and NFNC…SHSR. Positions 638 to 1753 are CRM (Cys-rich motif); that stretch reads CDPECSEVGC…CDCQSSTDEC (1116 aa). N-linked (GlcNAc...) asparagine glycosylation is present at Asn-667. N-linked (GlcNAc...) asparagine glycosylation is found at Asn-754, Asn-804, and Asn-854. N-linked (GlcNAc...) asparagine glycans are attached at residues Asn-951 and Asn-1016. Asn-1220 carries an N-linked (GlcNAc...) asparagine glycan. Asn-1317 is a glycosylation site (N-linked (GlcNAc...) asparagine). N-linked (GlcNAc...) asparagine glycosylation occurs at Asn-1523. N-linked (GlcNAc...) asparagine glycosylation is found at Asn-1711 and Asn-1733. The helical transmembrane segment at 1769 to 1789 threads the bilayer; that stretch reads ALLVTSGAMLLLLLGAAAVVW. The Cytoplasmic portion of the chain corresponds to 1790 to 1877; that stretch reads RKSRSRPVAK…EYDDESYSYQ (88 aa). AC regions lie at residues 1825–1844 and 1856–1877; these read VIEY…IVYM and YGLL…YSYQ.

The protein belongs to the peptidase S8 family. As to expression, PC5A is expressed in most tissues but is most abundant in the intestine and adrenals. PC5B is expressed in the intestine, adrenals and lung but not in the brain.

Its subcellular location is the secreted. It is found in the endomembrane system. Serine endoprotease that processes various proproteins by cleavage at paired basic amino acids, recognizing the RXXX[KR]R consensus motif. Likely functions in the constitutive and regulated secretory pathways. Plays an essential role in pregnancy establishment by proteolytic activation of a number of important factors such as BMP2, CALD1 and alpha-integrins. May be responsible for the maturation of gastrointestinal peptides. May be involved in the cellular proliferation of adrenal cortex via the activation of growth factors. This chain is Proprotein convertase subtilisin/kexin type 5 (Pcsk5), found in Mus musculus (Mouse).